The sequence spans 319 residues: Acetyl-coenzyme A carboxylase carboxyl transferase subunit alpha (319 aa).

One can recognise a CoA carboxyltransferase C-terminal domain in the interval 35–296 (NIDEEVHRLR…KAQLLADLAD (262 aa)).

The protein belongs to the AccA family. As to quaternary structure, acetyl-CoA carboxylase is a heterohexamer composed of biotin carboxyl carrier protein (AccB), biotin carboxylase (AccC) and two subunits each of ACCase subunit alpha (AccA) and ACCase subunit beta (AccD).

It localises to the cytoplasm. The enzyme catalyses N(6)-carboxybiotinyl-L-lysyl-[protein] + acetyl-CoA = N(6)-biotinyl-L-lysyl-[protein] + malonyl-CoA. It functions in the pathway lipid metabolism; malonyl-CoA biosynthesis; malonyl-CoA from acetyl-CoA: step 1/1. In terms of biological role, component of the acetyl coenzyme A carboxylase (ACC) complex. First, biotin carboxylase catalyzes the carboxylation of biotin on its carrier protein (BCCP) and then the CO(2) group is transferred by the carboxyltransferase to acetyl-CoA to form malonyl-CoA. The sequence is that of Acetyl-coenzyme A carboxylase carboxyl transferase subunit alpha from Escherichia coli O139:H28 (strain E24377A / ETEC).